The sequence spans 507 residues: 2,3-bisphosphoglycerate-independent phosphoglycerate mutase (507 aa).

Mn(2+)-binding residues include D13 and S63. S63 acts as the Phosphoserine intermediate in catalysis. Substrate is bound by residues H124, 153 to 154 (RD), R183, R189, 254 to 257 (RADR), and K330. Residues D396, H400, D437, H438, and H456 each coordinate Mn(2+).

This sequence belongs to the BPG-independent phosphoglycerate mutase family. Monomer. Mn(2+) is required as a cofactor.

The enzyme catalyses (2R)-2-phosphoglycerate = (2R)-3-phosphoglycerate. The protein operates within carbohydrate degradation; glycolysis; pyruvate from D-glyceraldehyde 3-phosphate: step 3/5. Functionally, catalyzes the interconversion of 2-phosphoglycerate and 3-phosphoglycerate. This chain is 2,3-bisphosphoglycerate-independent phosphoglycerate mutase, found in Paracoccus denitrificans (strain Pd 1222).